Reading from the N-terminus, the 168-residue chain is Ribosome maturation factor RimM (168 aa).

Positions 97 to 168 (PNEYYYYELL…RLVVKVPEWI (72 aa)) constitute a PRC barrel domain.

This sequence belongs to the RimM family. As to quaternary structure, binds ribosomal protein uS19.

The protein resides in the cytoplasm. An accessory protein needed during the final step in the assembly of 30S ribosomal subunit, possibly for assembly of the head region. Essential for efficient processing of 16S rRNA. May be needed both before and after RbfA during the maturation of 16S rRNA. It has affinity for free ribosomal 30S subunits but not for 70S ribosomes. This is Ribosome maturation factor RimM from Pseudothermotoga lettingae (strain ATCC BAA-301 / DSM 14385 / NBRC 107922 / TMO) (Thermotoga lettingae).